The sequence spans 302 residues: Protoheme IX farnesyltransferase (302 aa).

The next 9 membrane-spanning stretches (helical) occupy residues 28-48, 50-70, 95-115, 122-142, 150-170, 176-196, 221-241, 243-263, and 282-302; these read VVAL…PGVP, WSVL…AAVV, IAPL…MVVL, LTAW…TLFL, IVIG…AVTG, ALLL…ALAI, LHIL…FVTG, SGGI…QYAV, and ITYL…FVPA.

It belongs to the UbiA prenyltransferase family. Protoheme IX farnesyltransferase subfamily.

Its subcellular location is the cell inner membrane. The catalysed reaction is heme b + (2E,6E)-farnesyl diphosphate + H2O = Fe(II)-heme o + diphosphate. It functions in the pathway porphyrin-containing compound metabolism; heme O biosynthesis; heme O from protoheme: step 1/1. Its function is as follows. Converts heme B (protoheme IX) to heme O by substitution of the vinyl group on carbon 2 of heme B porphyrin ring with a hydroxyethyl farnesyl side group. This is Protoheme IX farnesyltransferase from Marinobacter nauticus (strain ATCC 700491 / DSM 11845 / VT8) (Marinobacter aquaeolei).